A 674-amino-acid chain; its full sequence is Translation initiation factor IF-2 (674 aa).

The region spanning 174–344 (IRPPVVTVMG…LLVAELREIK (171 aa)) is the tr-type G domain. Residues 183-190 (GHVDHGKT) form a G1 region. 183-190 (GHVDHGKT) provides a ligand contact to GTP. The segment at 208–212 (GITQS) is G2. The G3 stretch occupies residues 229–232 (DTPG). GTP-binding positions include 229-233 (DTPGH) and 283-286 (NKID). A G4 region spans residues 283–286 (NKID). Residues 320–322 (SAR) are G5.

Belongs to the TRAFAC class translation factor GTPase superfamily. Classic translation factor GTPase family. IF-2 subfamily.

It is found in the cytoplasm. Its function is as follows. One of the essential components for the initiation of protein synthesis. Protects formylmethionyl-tRNA from spontaneous hydrolysis and promotes its binding to the 30S ribosomal subunits. Also involved in the hydrolysis of GTP during the formation of the 70S ribosomal complex. The polypeptide is Translation initiation factor IF-2 (Pseudothermotoga lettingae (strain ATCC BAA-301 / DSM 14385 / NBRC 107922 / TMO) (Thermotoga lettingae)).